The sequence spans 127 residues: Large ribosomal subunit protein bL19 (127 aa).

It belongs to the bacterial ribosomal protein bL19 family.

Its function is as follows. This protein is located at the 30S-50S ribosomal subunit interface and may play a role in the structure and function of the aminoacyl-tRNA binding site. In Synechococcus sp. (strain JA-3-3Ab) (Cyanobacteria bacterium Yellowstone A-Prime), this protein is Large ribosomal subunit protein bL19.